Reading from the N-terminus, the 163-residue chain is Crossover junction endodeoxyribonuclease RuvC (163 aa).

Residues D4, E65, and D138 contribute to the active site. Residues D4, E65, and D138 each contribute to the Mg(2+) site.

It belongs to the RuvC family. Homodimer which binds Holliday junction (HJ) DNA. The HJ becomes 2-fold symmetrical on binding to RuvC with unstacked arms; it has a different conformation from HJ DNA in complex with RuvA. In the full resolvosome a probable DNA-RuvA(4)-RuvB(12)-RuvC(2) complex forms which resolves the HJ. Requires Mg(2+) as cofactor.

The protein localises to the cytoplasm. It catalyses the reaction Endonucleolytic cleavage at a junction such as a reciprocal single-stranded crossover between two homologous DNA duplexes (Holliday junction).. In terms of biological role, the RuvA-RuvB-RuvC complex processes Holliday junction (HJ) DNA during genetic recombination and DNA repair. Endonuclease that resolves HJ intermediates. Cleaves cruciform DNA by making single-stranded nicks across the HJ at symmetrical positions within the homologous arms, yielding a 5'-phosphate and a 3'-hydroxyl group; requires a central core of homology in the junction. The consensus cleavage sequence is 5'-(A/T)TT(C/G)-3'. Cleavage occurs on the 3'-side of the TT dinucleotide at the point of strand exchange. HJ branch migration catalyzed by RuvA-RuvB allows RuvC to scan DNA until it finds its consensus sequence, where it cleaves and resolves the cruciform DNA. This chain is Crossover junction endodeoxyribonuclease RuvC, found in Corynebacterium diphtheriae (strain ATCC 700971 / NCTC 13129 / Biotype gravis).